The primary structure comprises 734 residues: E3 ubiquitin-protein ligase TRIM56 (734 aa).

An RING-type zinc finger spans residues 21–60 (CKICLEQLHTPKTLPCLHTYCQDCLAQLDIGGQVRCPECR). B box-type zinc fingers lie at residues 98 to 149 (KPTC…VVDL) and 164 to 205 (RQAS…CLPL). Zn(2+) is bound by residues C169, H172, C192, and H197. Positions 215–303 (GLEELLAGVD…KIERQEQVAK (89 aa)) form a coiled coil. The segment covering 372–381 (EPKQSPKDSG) has biased composition (basic and acidic residues). The segment at 372–463 (EPKQSPKDSG…SPILRPNLEG (92 aa)) is disordered. Positions 435–448 (RPNKKKKCKGRGKS) are enriched in basic residues. The residue at position 454 (S454) is a Phosphoserine.

The protein belongs to the TRIM/RBCC family. As to quaternary structure, interacts with STING1. Interacts with TICAM1.

It is found in the cytoplasm. It carries out the reaction S-ubiquitinyl-[E2 ubiquitin-conjugating enzyme]-L-cysteine + [acceptor protein]-L-lysine = [E2 ubiquitin-conjugating enzyme]-L-cysteine + N(6)-ubiquitinyl-[acceptor protein]-L-lysine.. It participates in protein modification; protein ubiquitination. Functionally, E3 ubiquitin-protein ligase that plays a key role in innate antiviral immunity by mediating ubiquitination of CGAS and STING1. In response to pathogen- and host-derived double-stranded DNA (dsDNA), targets STING1 to 'Lys-63'-linked ubiquitination, thereby promoting its homodimerization, a step required for the production of type I interferon IFN-beta. Also mediates monoubiquitination of CGAS, thereby promoting CGAS oligomerization and subsequent activation. Independently of its E3 ubiquitin ligase activity, positive regulator of TLR3 signaling. Potentiates extracellular double stranded RNA (dsRNA)-induced expression of IFNB1 and interferon-stimulated genes ISG15, IFIT1/ISG56, CXCL10, OASL and CCL5/RANTES. This chain is E3 ubiquitin-protein ligase TRIM56, found in Mus musculus (Mouse).